Here is a 473-residue protein sequence, read N- to C-terminus: Sensor histidine kinase GtrS (473 aa).

The Cytoplasmic portion of the chain corresponds to 1–8 (MPRSLLGR). The chain crosses the membrane as a helical span at residues 9–29 (MLLLTLLAVLVAQGLSSLFWL). At 30–197 (SHLRSSQREG…LEPEGLQPQQ (168 aa)) the chain is on the periplasmic side. A helical transmembrane segment spans residues 198–218 (VLSIVFTSLLLLLFTGLLMHW). One can recognise an HAMP domain in the interval 217 to 269 (HWQSRPLKRLARAARDLALGSPSAALEERGASELVEVARAFNTMHERIDRYLN). Residues 219–473 (QSRPLKRLAR…SLRLPRLGLE (255 aa)) lie on the Cytoplasmic side of the membrane. Positions 277–471 (AISHDLRTPI…RVSLRLPRLG (195 aa)) constitute a Histidine kinase domain. His280 bears the Phosphohistidine; by autocatalysis mark.

Post-translationally, autophosphorylated.

It is found in the cell inner membrane. It carries out the reaction ATP + protein L-histidine = ADP + protein N-phospho-L-histidine.. Its function is as follows. Member of the two-component regulatory system GtrS/GltR involved in the regulation of glucose metabolism and transport, as well as regulation of the exotoxin A gene expression. GtrS recognizes and binds 2-ketogluconate and 6-phosphogluconate via its sensor domain, which accelerates GtrS autophosphorylation and concomitant transphosphorylation and regulation of the response regulator GltR. Plays a key role during bacteria-host interactions and is required for optimal colonization and dissemination in a mouse model of infection. Contributes to modulation of the type III secretion system (T3SS) in response to host cells via the regulation of the OprB transport system. This is Sensor histidine kinase GtrS from Pseudomonas aeruginosa (strain ATCC 15692 / DSM 22644 / CIP 104116 / JCM 14847 / LMG 12228 / 1C / PRS 101 / PAO1).